We begin with the raw amino-acid sequence, 384 residues long: Intraflagellar transport protein 46 homolog (384 aa).

Disordered stretches follow at residues 52–151 (VNAE…PADY) and 358–384 (SATDGQKSDTPPASRSATAEIERLTLD). Residues 87 to 99 (EKLEEDTKRKKEP) are compositionally biased toward basic and acidic residues. Over residues 110-138 (DEEEDEDDDDDDDDDDSDDTESDEEEEEP) the composition is skewed to acidic residues. Residues 358 to 374 (SATDGQKSDTPPASRSA) are compositionally biased toward polar residues.

This sequence belongs to the IFT46 family.

The protein localises to the cytoplasm. The protein resides in the cytoskeleton. It localises to the cilium basal body. It is found in the cell projection. Its subcellular location is the cilium. Forms part of a complex involved in intraflagellar transport (IFT), the bi-directional movement of particles required for the assembly, maintenance and functioning of primary cilia. Plays a role in early embryonic development. The protein is Intraflagellar transport protein 46 homolog of Danio rerio (Zebrafish).